The chain runs to 184 residues: Adenine phosphoribosyltransferase (184 aa).

The protein belongs to the purine/pyrimidine phosphoribosyltransferase family. As to quaternary structure, homodimer.

The protein localises to the cytoplasm. It carries out the reaction AMP + diphosphate = 5-phospho-alpha-D-ribose 1-diphosphate + adenine. Its pathway is purine metabolism; AMP biosynthesis via salvage pathway; AMP from adenine: step 1/1. Functionally, catalyzes a salvage reaction resulting in the formation of AMP, that is energically less costly than de novo synthesis. This chain is Adenine phosphoribosyltransferase, found in Mycobacterium marinum (strain ATCC BAA-535 / M).